We begin with the raw amino-acid sequence, 254 residues long: (2Z,6E)-farnesyl diphosphate synthase (254 aa).

Asp34 is an active-site residue. Asp34 lines the Mg(2+) pocket. Residues 35-38 (GNRR), Trp39, His52, and 80-82 (STD) contribute to the substrate site. Asn83 serves as the catalytic Proton acceptor. Substrate is bound by residues Arg86, Arg203, and 209 to 211 (RLS). Residue Glu222 coordinates Mg(2+).

It belongs to the UPP synthase family. Z-FPP synthase subfamily. In terms of assembly, homodimer. The cofactor is Mg(2+).

It catalyses the reaction isopentenyl diphosphate + (2E)-geranyl diphosphate = (2Z,6E)-farnesyl diphosphate + diphosphate. In terms of biological role, catalyzes the condensation of only one isopentenyl pyrophosphate (IPP) unit in the cis configuration to E-geranyl diphosphate (E-GPP) generating the 15 carbon product (2Z,6E)-farnesyl diphosphate (Z-FPP or EZ-FPP). Only geranyl diphosphate (GPP) can be used as isoprenyl acceptor. This is (2Z,6E)-farnesyl diphosphate synthase from Thermobifida fusca (strain YX).